A 626-amino-acid chain; its full sequence is Chaperone protein HtpG (626 aa).

The segment at Met-1–Arg-339 is a; substrate-binding. The interval Glu-340–Lys-555 is b. A c region spans residues Leu-556–Gly-626.

The protein belongs to the heat shock protein 90 family. As to quaternary structure, homodimer.

The protein localises to the cytoplasm. Molecular chaperone. Has ATPase activity. This is Chaperone protein HtpG from Haemophilus influenzae (strain 86-028NP).